The primary structure comprises 163 residues: Retinoic acid receptor responder protein 2 (163 aa).

Positions 1–20 (MRRLLIPLALWLGAVGVGVA) are cleaved as a signal peptide. Intrachain disulfides connect Cys-77–Cys-87, Cys-98–Cys-117, and Cys-101–Cys-135. Residues 158 to 163 (KALPRS) constitute a propeptide that is removed on maturation.

In terms of processing, secreted in an inactive precursor form, prochemerin, which is proteolytically processed by a variety of extracellular proteases to generate forms with differing levels of bioactivity. For example, the removal of six amino acids results in chemerin-157, which exhibits the highest activity, while removal of seven amino acids results in chemerin-156 which has slightly less activity. Some proteases are able to cleave at more than one site and chemerin forms may be sequentially processed by different enzymes to modulate activity levels. The coordinated expression and activity of chemerin-modifying enzymes is essential for regulating its bioactivation, inactivation and, consequently, biological function. Cathepsin G cleaves seven C-terminal amino acids from prochemerin (chemerin-156), elastase is able to cleave six (chemerin-157), eight (chemerin-155) or eleven (chemerin-152), plasmin cleaves five amino acids (chemerin-158), and tryptase cleaves five (chemerin-158) or eight (chemerin-155). Multiple cleavages might be required to fully activate chemerin, with an initial tryptase cleavage resulting in chemerin with low activity (chemerin-158), and a second cleavage by carboxypeptidase N or B producing highly active chemerin (chemerin-157). As to expression, expressed at the highest levels in placenta, liver, and white adipose tissue (WAT), and to a lesser extent in many other tissues such as lung, brown adipose tissue, heart, ovary, kidney, skeletal muscle and pancreas. Within WAT, expression is enriched in adipocytes as compared to the stromal vascular fraction. Expression and secretion increases dramatically with adipogenesis. Highly expressed in skin (basal and suprabasal layers of the epidermis, hair follicles and endothelial cells). Expression is elevated in numerous metabolic and inflammatory diseases including psoriasis, obesity, type 2 diabetes, metabolic syndrome and cardiovascular disease.

The protein resides in the secreted. Functionally, adipocyte-secreted protein (adipokine) that regulates adipogenesis, metabolism and inflammation through activation of the chemokine-like receptor 1 (CMKLR1). Also acts as a ligand for CMKLR2. Can also bind to C-C chemokine receptor-like 2 (CCRL2), but with a lower affinity than it does to CMKLR1 or CMKLR2. Positively regulates adipocyte differentiation, modulates the expression of adipocyte genes involved in lipid and glucose metabolism and might play a role in angiogenesis, a process essential for the expansion of white adipose tissue. Also acts as a pro-inflammatory adipokine, causing an increase in secretion of pro-inflammatory and prodiabetic adipokines, which further impair adipose tissue metabolic function and have negative systemic effects including impaired insulin sensitivity, altered glucose and lipid metabolism, and a decrease in vascular function in other tissues. Can have both pro- and anti-inflammatory properties depending on the modality of enzymatic cleavage by different classes of proteases. Acts as a chemotactic factor for leukocyte populations expressing CMKLR1, particularly immature plasmacytoid dendritic cells, but also immature myeloid DCs, macrophages and natural killer cells. Exerts an anti-inflammatory role by preventing TNF/TNFA-induced VCAM1 expression and monocytes adhesion in vascular endothelial cells. The effect is mediated via inhibiting activation of NF-kappa-B and CRK/p38 through stimulation of AKT1/NOS3 signaling and nitric oxide production. Its dual role in inflammation and metabolism might provide a link between chronic inflammation and obesity, as well as obesity-related disorders such as type 2 diabetes and cardiovascular disease. Exhibits an antimicrobial function in the skin. The sequence is that of Retinoic acid receptor responder protein 2 (RARRES2) from Homo sapiens (Human).